Reading from the N-terminus, the 249-residue chain is Selenoprotein BthD (249 aa).

Positions 1-22 are disordered; sequence MPPKRNKKAEAPIAERDAGEEL. A compositionally biased stretch (basic and acidic residues) spans 8–19; sequence KAEAPIAERDAG. A cross-link (cysteinyl-selenocysteine (Cys-Sec); redox-active) is located at residues 34–37; sequence CRSU. Residue U37 is a non-standard amino acid, selenocysteine. Residues 122-249 are disordered; sequence QQESKEQTNT…EATAGAKRRR (128 aa). S147 carries the phosphoserine modification. Residues 175–198 are compositionally biased toward basic and acidic residues; that stretch reads EQKSEEEPTQVDSKEAKQSKELVK. The segment covering 199–210 has biased composition (basic residues); it reads TKRQPKAQKKQA.

Expressed in the developing salivary gland at late stages of embryogenesis. Also expressed in brain, neuroblast and wing disk.

Its subcellular location is the cytoplasm. The protein resides in the secreted. Functionally, may be involved in a redox-related process. Required for survival and specifically for salivary gland morphogenesis. This is Selenoprotein BthD (BthD) from Drosophila melanogaster (Fruit fly).